The following is a 524-amino-acid chain: Probable glutamyl-tRNA reductase 3, chloroplastic (524 aa).

Residues 1–52 (MAVSNASVVLSPNLETSSSWYHHNPSSSLDLIRIHTLPMNKMTRRGLIQRVR) constitute a chloroplast transit peptide. Residues 129–132 (TCNR), Ser-189, 194–196 (ENQ), and Gln-200 each bind substrate. Catalysis depends on Cys-130, which acts as the Nucleophile. Residue 269-274 (GAGEMG) coordinates NADP(+).

It belongs to the glutamyl-tRNA reductase family.

It is found in the plastid. Its subcellular location is the chloroplast. The enzyme catalyses (S)-4-amino-5-oxopentanoate + tRNA(Glu) + NADP(+) = L-glutamyl-tRNA(Glu) + NADPH + H(+). Its pathway is porphyrin-containing compound metabolism; protoporphyrin-IX biosynthesis; 5-aminolevulinate from L-glutamyl-tRNA(Glu): step 1/2. It functions in the pathway porphyrin-containing compound metabolism; chlorophyll biosynthesis. Functionally, catalyzes the NADPH-dependent reduction of glutamyl-tRNA(Glu) to glutamate 1-semialdehyde (GSA). This Arabidopsis thaliana (Mouse-ear cress) protein is Probable glutamyl-tRNA reductase 3, chloroplastic (HEMA3).